Reading from the N-terminus, the 358-residue chain is HTH-type transcriptional regulator IpsA (358 aa).

The 56-residue stretch at 8-63 (GTLASIAAKLGISRTTVSNAYNRPEQLSAELRQRILDTAEDMGYLGPDPVARSLRT) folds into the HTH lacI-type domain. The H-T-H motif DNA-binding region spans 10–29 (LASIAAKLGISRTTVSNAYN).

In terms of assembly, homodimer.

Myo-inositol causes the dissociation of the IpsA-DNA complex in vitro. Its function is as follows. Plays a role in the regulation of cell wall biogenesis. Inositol-dependent transcriptional activator of ino1, which encodes inositol phosphate synthase. Also regulates other target genes, which are most likely involved in the synthesis of inositol-derived cell wall components and mycothiol. Acts by binding to a conserved palindromic motif within the promoter regions. In Corynebacterium glutamicum (strain ATCC 13032 / DSM 20300 / JCM 1318 / BCRC 11384 / CCUG 27702 / LMG 3730 / NBRC 12168 / NCIMB 10025 / NRRL B-2784 / 534), this protein is HTH-type transcriptional regulator IpsA.